Consider the following 285-residue polypeptide: Probable endonuclease 4 (285 aa).

The Zn(2+) site is built by histidine 69, histidine 109, glutamate 145, aspartate 179, histidine 182, histidine 216, aspartate 229, histidine 231, and glutamate 261.

This sequence belongs to the AP endonuclease 2 family. The cofactor is Zn(2+).

It catalyses the reaction Endonucleolytic cleavage to 5'-phosphooligonucleotide end-products.. Functionally, endonuclease IV plays a role in DNA repair. It cleaves phosphodiester bonds at apurinic or apyrimidinic (AP) sites, generating a 3'-hydroxyl group and a 5'-terminal sugar phosphate. The polypeptide is Probable endonuclease 4 (Escherichia coli O127:H6 (strain E2348/69 / EPEC)).